The chain runs to 495 residues: MSIHVKNNIHWVGQRDWEVRDFHGTEYKTHKGTSYNSYLIREGKNVLIDTVDHKFSREFVQNLAAEIDLATIDYVVINHAEEDHAGALTELMARIPGTPIYCTHNAIDSITGHHHHPEWNFHPVKTGDSLDIGNGKQLVFIETPMLHWPDSMMTYMTEDAVLFSNDAFGQHYCDEHLFNDEVDQTELMEQCQRYYANILTPFSPLVTAKIKEVLGFNLPVSMVATSHGIVWREDPTQIILKYLEWADHYQEDRITLFYDSMSNNTRMMADAIAQGIHEVDPGVAVKIYNVARHDKNEILTQVFRSKGILVGSSTMNNVMMPKVAGMLEEITGLRFRNKRASAFGSYGWTGGAVDRIQTRLMDAGFDISISLKAKWRPDGSALAECREHGRQLARQWALHPLDAPRPLATTQATPAPEMPAAVTAAPKATAAAAEWDDDQAMLCTVCQWVYDPAQGEPDQLVAPGTPWAQVPDSFLCPGCGIGKEVFEPCAVEACV.

Residues 30–210 form a zinc metallo-hydrolase region; sequence HKGTSYNSYL…PFSPLVTAKI (181 aa). His-79, Glu-81, Asp-83, His-147, Asp-166, and His-227 together coordinate Fe cation. Residues 254–393 form the Flavodoxin-like domain; it reads ITLFYDSMSN…ECREHGRQLA (140 aa). Residues 260-264 and 342-369 each bind FMN; these read SMSNN and AFGS…DISI. The Rubredoxin-like domain occupies 438-489; that stretch reads DQAMLCTVCQWVYDPAQGEPDQLVAPGTPWAQVPDSFLCPGCGIGKEVFEPC. Positions 443, 446, 476, and 479 each coordinate Fe cation.

In the N-terminal section; belongs to the zinc metallo-hydrolase group 3 family. Homotetramer. Requires Fe cation as cofactor. FMN is required as a cofactor.

The protein localises to the cytoplasm. It participates in nitrogen metabolism; nitric oxide reduction. In terms of biological role, anaerobic nitric oxide reductase; uses NADH to detoxify nitric oxide (NO), protecting several 4Fe-4S NO-sensitive enzymes. Has at least 2 reductase partners, only one of which (NorW, flavorubredoxin reductase) has been identified. NO probably binds to the di-iron center; electrons enter from the NorW at rubredoxin and are transferred sequentially to the FMN center and the di-iron center. Also able to function as an aerobic oxygen reductase. This is Anaerobic nitric oxide reductase flavorubredoxin from Aeromonas hydrophila subsp. hydrophila (strain ATCC 7966 / DSM 30187 / BCRC 13018 / CCUG 14551 / JCM 1027 / KCTC 2358 / NCIMB 9240 / NCTC 8049).